We begin with the raw amino-acid sequence, 520 residues long: Versicolorin B desaturase (520 aa).

A helical transmembrane segment spans residues 22-42 (IFTTILSIFGIALSAVAAWGI). N-linked (GlcNAc...) asparagine glycosylation is found at Asn-266 and Asn-426. Cys-462 is a binding site for heme.

Belongs to the cytochrome P450 family. It depends on heme as a cofactor.

It localises to the membrane. It carries out the reaction versicolorin B + NADPH + O2 + H(+) = versicolorin A + NADP(+) + 2 H2O. Its pathway is mycotoxin biosynthesis. Its function is as follows. Versicolorin B desaturase; part of the fragmented gene cluster that mediates the biosynthesis of dothistromin (DOTH), a polyketide toxin very similar in structure to the aflatoxin precursor, versicolorin B. The first step of the pathway is the conversion of acetate to norsolorinic acid (NOR) and requires the fatty acid synthase subunits hexA and hexB, as well as the polyketide synthase pksA. PksA combines a hexanoyl starter unit and 7 malonyl-CoA extender units to synthesize the precursor NOR. The hexanoyl starter unit is provided to the acyl-carrier protein (ACP) domain by the fungal fatty acid synthase hexA/hexB. The second step is the conversion of NOR to averantin (AVN) and requires the norsolorinic acid ketoreductase nor1, which catalyzes the dehydration of norsolorinic acid to form (1'S)-averantin. The cytochrome P450 monooxygenase avnA then catalyzes the hydroxylation of AVN to 5'hydroxyaverantin (HAVN). The next step is performed by adhA that transforms HAVN to averufin (AVF). Averufin might then be converted to hydroxyversicolorone by cypX and avfA. Hydroxyversicolorone is further converted versiconal hemiacetal acetate (VHA) by moxY. VHA is then the substrate for the versiconal hemiacetal acetate esterase est1 to yield versiconal (VAL). Versicolorin B synthase vbsA then converts VAL to versicolorin B (VERB) by closing the bisfuran ring. Then, the activity of the versicolorin B desaturase verB leads to versicolorin A (VERA). DotB, a predicted chloroperoxidase, may perform epoxidation of the A-ring of VERA. Alternatively, a cytochrome P450, such as cypX or avnA could catalyze this step. It is also possible that another, uncharacterized, cytochrome P450 enzyme is responsible for this step. Opening of the epoxide could potentially be achieved by the epoxide hydrolase epoA. However, epoA seems not to be required for DOTH biosynthesis, but other epoxide hydrolases may have the ability to complement this hydrolysis. Alternatively, opening of the epoxide ring could be achieved non-enzymatically. The next step is the deoxygenation of ring A to yield the 5,8-dihydroxyanthraquinone which is most likely catalyzed by the NADPH dehydrogenase encoded by ver1. The last stages of DOTH biosynthesis are proposed to involve hydroxylation of the bisfuran. OrdB and norB might have oxidative roles here. An alternative possibility is that cytochrome P450 monoogenases such as avnA and cypX might perform these steps in addition to previously proposed steps. The chain is Versicolorin B desaturase from Dothistroma septosporum (strain NZE10 / CBS 128990) (Red band needle blight fungus).